Here is a 1201-residue protein sequence, read N- to C-terminus: Autophagy-related protein 11 (1201 aa).

A disordered region spans residues 90-109 (FPFLGRPSTPTKGSDNSTGT). Positions 97 to 109 (STPTKGSDNSTGT) are enriched in polar residues. A coiled-coil region spans residues 418–452 (LLRSDDMVRSLRDEKSKLEEKVKGSESRIRKLEDL). 2 disordered regions span residues 458–503 (HMGR…SEEK) and 525–545 (KLQK…QEVQ). Low complexity predominate over residues 485–499 (RRSSVSSRRMSSNQS). The segment covering 525–542 (KLQKDAHAERQSNTDKIQ) has biased composition (basic and acidic residues). Coiled-coil stretches lie at residues 566–670 (RRFL…ALQA) and 710–828 (SAKA…WKER). Disordered regions lie at residues 1052–1076 (SMNG…DDEN) and 1115–1201 (DARG…LQGP). The segment covering 1133-1166 (RTLSKSLDSRRNSSNSKKGPATPSQRGNDSTTDL) has biased composition (polar residues). Residues 1191–1201 (EEVRRDQLQGP) are compositionally biased toward basic and acidic residues.

This sequence belongs to the ATG11 family. As to quaternary structure, homodimer and potential homooligomers.

It is found in the preautophagosomal structure membrane. In terms of biological role, selective autophagy-specific protein required for pexophagy and mitophagy. In contrast to its Saccharomyces cerevisiae ATG11 ortholog, is not involved in non-selective autophagy nor in cytoplasm to vacuole transport (Cvt). The sequence is that of Autophagy-related protein 11 from Aspergillus oryzae (strain ATCC 42149 / RIB 40) (Yellow koji mold).